We begin with the raw amino-acid sequence, 392 residues long: Chaperone protein DnaJ 1 (392 aa).

One can recognise a J domain in the interval 4–67 (DYYEILGVSH…QKRAVFDRGG (64 aa)). The CR-type zinc finger occupies 134 to 216 (GVTKSLEVDT…CSGEGRVRTT (83 aa)). Zn(2+)-binding residues include Cys147, Cys150, Cys164, Cys167, Cys190, Cys193, Cys204, and Cys207. CXXCXGXG motif repeat units follow at residues 147–154 (CPKCQGKG), 164–171 (CDTCQGRG), 190–197 (CPTCHGYG), and 204–211 (CQECSGEG). The interval 367–392 (ETNASASVEKSGGRGMFSRIKEAFGG) is disordered.

This sequence belongs to the DnaJ family. As to quaternary structure, homodimer. Zn(2+) serves as cofactor.

It is found in the cytoplasm. In terms of biological role, participates actively in the response to hyperosmotic and heat shock by preventing the aggregation of stress-denatured proteins and by disaggregating proteins, also in an autonomous, DnaK-independent fashion. Unfolded proteins bind initially to DnaJ; upon interaction with the DnaJ-bound protein, DnaK hydrolyzes its bound ATP, resulting in the formation of a stable complex. GrpE releases ADP from DnaK; ATP binding to DnaK triggers the release of the substrate protein, thus completing the reaction cycle. Several rounds of ATP-dependent interactions between DnaJ, DnaK and GrpE are required for fully efficient folding. Also involved, together with DnaK and GrpE, in the DNA replication of plasmids through activation of initiation proteins. The polypeptide is Chaperone protein DnaJ 1 (Cutibacterium acnes (strain DSM 16379 / KPA171202) (Propionibacterium acnes)).